Consider the following 381-residue polypeptide: tRNA-cytidine(32) 2-sulfurtransferase (381 aa).

The PP-loop motif motif lies at 101 to 106 (SGGKDS). The [4Fe-4S] cluster site is built by Cys176, Cys179, and Cys267.

Belongs to the TtcA family. In terms of assembly, homodimer. The cofactor is Mg(2+). It depends on [4Fe-4S] cluster as a cofactor.

Its subcellular location is the cytoplasm. It carries out the reaction cytidine(32) in tRNA + S-sulfanyl-L-cysteinyl-[cysteine desulfurase] + AH2 + ATP = 2-thiocytidine(32) in tRNA + L-cysteinyl-[cysteine desulfurase] + A + AMP + diphosphate + H(+). It participates in tRNA modification. Functionally, catalyzes the ATP-dependent 2-thiolation of cytidine in position 32 of tRNA, to form 2-thiocytidine (s(2)C32). The sulfur atoms are provided by the cysteine/cysteine desulfurase (IscS) system. The chain is tRNA-cytidine(32) 2-sulfurtransferase from Psychrobacter cryohalolentis (strain ATCC BAA-1226 / DSM 17306 / VKM B-2378 / K5).